Reading from the N-terminus, the 195-residue chain is MEQFISHTGVGVPLRRSNVDTDQIIPAVYLKRVTRTGFEDGLFARWREDPDFVLNQDTYKNGSILVAGPDFGTGSSREHAAWALMDYGFRVVISARFADIFRGNAGKNGLVAAQMTEEDIELIWKLLDEQPGRTMTVDLEERTVTVGDAVFGFDIDDHTRWRLMEGLDDIALTLRNEDAITQYEKSRSPFMPRTI.

Belongs to the LeuD family. LeuD type 1 subfamily. As to quaternary structure, heterodimer of LeuC and LeuD.

It catalyses the reaction (2R,3S)-3-isopropylmalate = (2S)-2-isopropylmalate. It participates in amino-acid biosynthesis; L-leucine biosynthesis; L-leucine from 3-methyl-2-oxobutanoate: step 2/4. Functionally, catalyzes the isomerization between 2-isopropylmalate and 3-isopropylmalate, via the formation of 2-isopropylmaleate. The chain is 3-isopropylmalate dehydratase small subunit from Corynebacterium kroppenstedtii (strain DSM 44385 / JCM 11950 / CIP 105744 / CCUG 35717).